The following is a 252-amino-acid chain: 3-dehydroquinate dehydratase (252 aa).

3-dehydroquinate-binding positions include Ser21, 46–48 (EWR), and Arg82. His143 functions as the Proton donor/acceptor in the catalytic mechanism. Lys170 serves as the catalytic Schiff-base intermediate with substrate. 3-dehydroquinate-binding residues include Arg213, Ser232, and Gln236.

It belongs to the type-I 3-dehydroquinase family. In terms of assembly, homodimer.

It carries out the reaction 3-dehydroquinate = 3-dehydroshikimate + H2O. It participates in metabolic intermediate biosynthesis; chorismate biosynthesis; chorismate from D-erythrose 4-phosphate and phosphoenolpyruvate: step 3/7. Involved in the third step of the chorismate pathway, which leads to the biosynthesis of aromatic amino acids. Catalyzes the cis-dehydration of 3-dehydroquinate (DHQ) and introduces the first double bond of the aromatic ring to yield 3-dehydroshikimate. This Escherichia coli O127:H6 (strain E2348/69 / EPEC) protein is 3-dehydroquinate dehydratase.